A 340-amino-acid polypeptide reads, in one-letter code: GTP 3',8-cyclase (340 aa).

In terms of domain architecture, Radical SAM core spans 20-246 (RFERQYVYLR…PKALSDGPAK (227 aa)). Arg29 is a binding site for GTP. Residues Cys36 and Cys40 each coordinate [4Fe-4S] cluster. Tyr42 serves as a coordination point for S-adenosyl-L-methionine. Cys43 serves as a coordination point for [4Fe-4S] cluster. Arg79 serves as a coordination point for GTP. Gly83 lines the S-adenosyl-L-methionine pocket. Thr110 lines the GTP pocket. Ser134 serves as a coordination point for S-adenosyl-L-methionine. Residue Lys171 coordinates GTP. Residue Met205 coordinates S-adenosyl-L-methionine. The [4Fe-4S] cluster site is built by Cys268 and Cys271. Position 273-275 (273-275 (RLR)) interacts with GTP. [4Fe-4S] cluster is bound at residue Cys285.

Belongs to the radical SAM superfamily. MoaA family. As to quaternary structure, monomer and homodimer. It depends on [4Fe-4S] cluster as a cofactor.

It carries out the reaction GTP + AH2 + S-adenosyl-L-methionine = (8S)-3',8-cyclo-7,8-dihydroguanosine 5'-triphosphate + 5'-deoxyadenosine + L-methionine + A + H(+). It functions in the pathway cofactor biosynthesis; molybdopterin biosynthesis. In terms of biological role, catalyzes the cyclization of GTP to (8S)-3',8-cyclo-7,8-dihydroguanosine 5'-triphosphate. This Actinobacillus pleuropneumoniae serotype 3 (strain JL03) protein is GTP 3',8-cyclase.